The chain runs to 450 residues: Chromosomal replication initiator protein DnaA (450 aa).

The segment at 1-77 (MTENEQIFWN…EVYNAQIAVD (77 aa)) is domain I, interacts with DnaA modulators. The domain II stretch occupies residues 77–109 (DYVYEDDLMIEQQHQGQQGYTEQAFQQLPAVQS). A domain III, AAA+ region region spans residues 110–328 (DLNPKYSFDN…GALKDISLVA (219 aa)). The ATP site is built by glycine 154, glycine 156, lysine 157, and threonine 158. A domain IV, binds dsDNA region spans residues 329–450 (NFKQIDTITV…EIETIKNKIK (122 aa)).

It belongs to the DnaA family. In terms of assembly, oligomerizes as a right-handed, spiral filament on DNA at oriC.

The protein resides in the cytoplasm. Plays an essential role in the initiation and regulation of chromosomal replication. ATP-DnaA binds to the origin of replication (oriC) to initiate formation of the DNA replication initiation complex once per cell cycle. Binds the DnaA box (a 9 base pair repeat at the origin) and separates the double-stranded (ds)DNA. Forms a right-handed helical filament on oriC DNA; dsDNA binds to the exterior of the filament while single-stranded (ss)DNA is stabiized in the filament's interior. The ATP-DnaA-oriC complex binds and stabilizes one strand of the AT-rich DNA unwinding element (DUE), permitting loading of DNA polymerase. After initiation quickly degrades to an ADP-DnaA complex that is not apt for DNA replication. Binds acidic phospholipids. In Streptococcus equi subsp. equi (strain 4047), this protein is Chromosomal replication initiator protein DnaA.